Here is a 158-residue protein sequence, read N- to C-terminus: MFRIGQGFDVHEFAEGRPLIIGGVTIPHEKGLIGHSDADVLLHTIADACLGAIAAGDIGKHFPDTDPAFKDADSAVLLQKVWEFVREQGYELGNLDCTIIAQKPKMAPHIESMRKRISELLETSIDNINVKATTTEKLGFTGREEGIASQAVVLLQKK.

2 residues coordinate a divalent metal cation: Asp-9 and His-11. Residues 9-11 (DVH) and 35-36 (HS) each bind 4-CDP-2-C-methyl-D-erythritol 2-phosphate. Position 43 (His-43) interacts with a divalent metal cation. 4-CDP-2-C-methyl-D-erythritol 2-phosphate-binding positions include 57–59 (DIG), 62–66 (FPDTD), 101–107 (AQKPKMA), 133–136 (TTTE), Phe-140, and Arg-143.

It belongs to the IspF family. Homotrimer. It depends on a divalent metal cation as a cofactor.

The catalysed reaction is 4-CDP-2-C-methyl-D-erythritol 2-phosphate = 2-C-methyl-D-erythritol 2,4-cyclic diphosphate + CMP. Its pathway is isoprenoid biosynthesis; isopentenyl diphosphate biosynthesis via DXP pathway; isopentenyl diphosphate from 1-deoxy-D-xylulose 5-phosphate: step 4/6. Its function is as follows. Involved in the biosynthesis of isopentenyl diphosphate (IPP) and dimethylallyl diphosphate (DMAPP), two major building blocks of isoprenoid compounds. Catalyzes the conversion of 4-diphosphocytidyl-2-C-methyl-D-erythritol 2-phosphate (CDP-ME2P) to 2-C-methyl-D-erythritol 2,4-cyclodiphosphate (ME-CPP) with a corresponding release of cytidine 5-monophosphate (CMP). The polypeptide is 2-C-methyl-D-erythritol 2,4-cyclodiphosphate synthase (Bacillus cereus (strain ATCC 10987 / NRS 248)).